The following is a 1178-amino-acid chain: Mediator of RNA polymerase II transcription subunit 14 (1178 aa).

Over residues 1–12 the composition is skewed to polar residues; sequence MDNSVHNNSNTT. 2 disordered regions span residues 1 to 50 and 1064 to 1178; these read MDNS…PITV and LAGT…VVLD. Composition is skewed to low complexity over residues 1074 to 1112 and 1119 to 1164; these read PTQIQQPQQPSPHPQQAQVQEQRQQPQQQQQANPLQGAA and HQLQ…AQQR.

The protein belongs to the Mediator complex subunit 14 family. In terms of assembly, component of the Mediator complex.

The protein localises to the nucleus. Its function is as follows. Component of the Mediator complex, a coactivator involved in the regulated transcription of nearly all RNA polymerase II-dependent genes. Mediator functions as a bridge to convey information from gene-specific regulatory proteins to the basal RNA polymerase II transcription machinery. Mediator is recruited to promoters by direct interactions with regulatory proteins and serves as a scaffold for the assembly of a functional preinitiation complex with RNA polymerase II and the general transcription factors. This Chaetomium globosum (strain ATCC 6205 / CBS 148.51 / DSM 1962 / NBRC 6347 / NRRL 1970) (Soil fungus) protein is Mediator of RNA polymerase II transcription subunit 14 (RGR1).